A 416-amino-acid polypeptide reads, in one-letter code: NADH-quinone oxidoreductase subunit H (416 aa).

Helical transmembrane passes span 16–36 (LILA…LAAI), 84–104 (PVYL…FAVI), 124–144 (LAVA…GIVL), 165–185 (VVSY…YAGT), 197–217 (STWY…SMVG), 260–280 (VSAL…PISL), 288–308 (WWPL…YIWL), 320–340 (FMAI…MIVA), and 353–373 (WASG…VVLW).

It belongs to the complex I subunit 1 family. NDH-1 is composed of 14 different subunits. Subunits NuoA, H, J, K, L, M, N constitute the membrane sector of the complex.

It localises to the cell membrane. It carries out the reaction a quinone + NADH + 5 H(+)(in) = a quinol + NAD(+) + 4 H(+)(out). Its function is as follows. NDH-1 shuttles electrons from NADH, via FMN and iron-sulfur (Fe-S) centers, to quinones in the respiratory chain. The immediate electron acceptor for the enzyme in this species is believed to be menaquinone. Couples the redox reaction to proton translocation (for every two electrons transferred, four hydrogen ions are translocated across the cytoplasmic membrane), and thus conserves the redox energy in a proton gradient. This subunit may bind ubiquinone. The chain is NADH-quinone oxidoreductase subunit H from Mycobacterium sp. (strain JLS).